The primary structure comprises 43 residues: Protein PsbN (43 aa).

Residues 5-27 (TLIAISISGLIVSFTGYALYTAF) form a helical membrane-spanning segment.

This sequence belongs to the PsbN family.

It localises to the plastid. Its subcellular location is the chloroplast thylakoid membrane. May play a role in photosystem I and II biogenesis. In Cicer arietinum (Chickpea), this protein is Protein PsbN.